The chain runs to 475 residues: Citrate synthase, mitochondrial (475 aa).

Residues His310, His356, and Asp411 contribute to the active site.

It belongs to the citrate synthase family.

Its subcellular location is the mitochondrion matrix. The catalysed reaction is oxaloacetate + acetyl-CoA + H2O = citrate + CoA + H(+). Its pathway is carbohydrate metabolism; tricarboxylic acid cycle; isocitrate from oxaloacetate: step 1/2. In Aspergillus niger, this protein is Citrate synthase, mitochondrial (cit-1).